The chain runs to 214 residues: tRNA (guanine-N(7)-)-methyltransferase (214 aa).

S-adenosyl-L-methionine-binding residues include glutamate 43, glutamate 68, aspartate 95, and aspartate 117. Aspartate 117 is an active-site residue. Substrate contacts are provided by residues lysine 121, aspartate 153, and 190–193 (TEYE).

The protein belongs to the class I-like SAM-binding methyltransferase superfamily. TrmB family.

It catalyses the reaction guanosine(46) in tRNA + S-adenosyl-L-methionine = N(7)-methylguanosine(46) in tRNA + S-adenosyl-L-homocysteine. It participates in tRNA modification; N(7)-methylguanine-tRNA biosynthesis. Its function is as follows. Catalyzes the formation of N(7)-methylguanine at position 46 (m7G46) in tRNA. The chain is tRNA (guanine-N(7)-)-methyltransferase from Staphylococcus aureus (strain MSSA476).